A 285-amino-acid polypeptide reads, in one-letter code: RNase adapter protein RapZ (285 aa).

Residue 8 to 15 (GRSGSGKS) coordinates ATP. 56 to 59 (DVRN) is a binding site for GTP. Positions 266–285 (RSRGKNVQSRHRTLEKRKPS) are RNA-binding.

Belongs to the RapZ-like family. RapZ subfamily. Homotrimer.

Its function is as follows. Modulates the synthesis of GlmS, by affecting the processing and stability of the regulatory small RNA GlmZ. When glucosamine-6-phosphate (GlcN6P) concentrations are high in the cell, RapZ binds GlmZ and targets it to cleavage by RNase E. Consequently, GlmZ is inactivated and unable to activate GlmS synthesis. Under low GlcN6P concentrations, RapZ is sequestered and inactivated by an other regulatory small RNA, GlmY, preventing GlmZ degradation and leading to synthesis of GlmS. This Pectobacterium atrosepticum (strain SCRI 1043 / ATCC BAA-672) (Erwinia carotovora subsp. atroseptica) protein is RNase adapter protein RapZ.